The following is a 348-amino-acid chain: Dihydroorotase (348 aa).

Residues H17 and H19 each coordinate Zn(2+). Residues 19 to 21 and N45 contribute to the substrate site; that span reads HLR. Zn(2+) is bound by residues K103, H140, and H178. K103 carries the post-translational modification N6-carboxylysine. Residue H140 participates in substrate binding. L223 is a substrate binding site. Residue D251 participates in Zn(2+) binding. D251 is a catalytic residue. Positions 255 and 267 each coordinate substrate.

Belongs to the metallo-dependent hydrolases superfamily. DHOase family. Class II DHOase subfamily. Homodimer. Zn(2+) is required as a cofactor.

The catalysed reaction is (S)-dihydroorotate + H2O = N-carbamoyl-L-aspartate + H(+). The protein operates within pyrimidine metabolism; UMP biosynthesis via de novo pathway; (S)-dihydroorotate from bicarbonate: step 3/3. Catalyzes the reversible cyclization of carbamoyl aspartate to dihydroorotate. In Yersinia pseudotuberculosis serotype I (strain IP32953), this protein is Dihydroorotase.